The following is a 436-amino-acid chain: Ribulose bisphosphate carboxylase large chain (436 aa).

Substrate-binding residues include N104 and T154. The Proton acceptor role is filled by K156. K158 provides a ligand contact to substrate. The Mg(2+) site is built by K182, D184, and E185. K182 bears the N6-carboxylysine mark. H275 acts as the Proton acceptor in catalysis. 3 residues coordinate substrate: R276, H308, and S360.

Belongs to the RuBisCO large chain family. Type I subfamily. In terms of assembly, heterohexadecamer of 8 large chains and 8 small chains. Mg(2+) serves as cofactor.

It localises to the plastid. The protein localises to the chloroplast. The catalysed reaction is 2 (2R)-3-phosphoglycerate + 2 H(+) = D-ribulose 1,5-bisphosphate + CO2 + H2O. It carries out the reaction D-ribulose 1,5-bisphosphate + O2 = 2-phosphoglycolate + (2R)-3-phosphoglycerate + 2 H(+). RuBisCO catalyzes two reactions: the carboxylation of D-ribulose 1,5-bisphosphate, the primary event in carbon dioxide fixation, as well as the oxidative fragmentation of the pentose substrate in the photorespiration process. Both reactions occur simultaneously and in competition at the same active site. This chain is Ribulose bisphosphate carboxylase large chain, found in Euglena stellata.